We begin with the raw amino-acid sequence, 245 residues long: Adenylate kinase (245 aa).

An ATP-binding site is contributed by 15 to 20; sequence GSGKGT. The interval 35–64 is NMP; it reads SSGDLLRGAVSKDTPLSQEIKSYLDQGKLL. Residues S36, R41, 62–64, 103–106, and Q110 contribute to the AMP site; these read KLL and GFPR. Residues 143–176 are LID; that stretch reads SRYICPACQGIYNEQQGFSSCPKCSVELIRRSDD. R144 is a binding site for ATP. Zn(2+)-binding residues include C147 and C150. Residue 153–154 participates in ATP binding; that stretch reads IY. C163 and C166 together coordinate Zn(2+). AMP contacts are provided by R173 and R184. ATP is bound at residue A212.

It belongs to the adenylate kinase family. Monomer.

It is found in the cytoplasm. The enzyme catalyses AMP + ATP = 2 ADP. It functions in the pathway purine metabolism; AMP biosynthesis via salvage pathway; AMP from ADP: step 1/1. Catalyzes the reversible transfer of the terminal phosphate group between ATP and AMP. Plays an important role in cellular energy homeostasis and in adenine nucleotide metabolism. The chain is Adenylate kinase from Chlamydia trachomatis serovar L2 (strain ATCC VR-902B / DSM 19102 / 434/Bu).